The following is a 528-amino-acid chain: Na(+)/H(+) antiporter NhaB (528 aa).

Helical transmembrane passes span phenylalanine 28–valine 50, proline 67–leucine 87, leucine 98–phenylalanine 118, alanine 140–valine 160, phenylalanine 240–phenylalanine 260, alanine 305–isoleucine 325, glutamate 350–isoleucine 370, leucine 391–glycine 411, alanine 449–isoleucine 469, and methionine 476–glutamate 496.

Belongs to the NhaB Na(+)/H(+) (TC 2.A.34) antiporter family.

Its subcellular location is the cell inner membrane. It carries out the reaction 2 Na(+)(in) + 3 H(+)(out) = 2 Na(+)(out) + 3 H(+)(in). Its function is as follows. Na(+)/H(+) antiporter that extrudes sodium in exchange for external protons. The chain is Na(+)/H(+) antiporter NhaB from Shewanella frigidimarina (strain NCIMB 400).